Reading from the N-terminus, the 403-residue chain is Zinc finger CCHC domain-containing protein 3 (403 aa).

The segment at 1 to 158 is disordered; that stretch reads MATGGGAEEE…PLQDEPAAAA (158 aa). 2 stretches are compositionally biased toward basic and acidic residues: residues 26-38 and 47-65; these read ARGE…REKM and LAEK…REEE. Over residues 67 to 79 the composition is skewed to gly residues; it reads GGGGGSAGLGGPA. The span at 95–121 shows a compositional bias: basic and acidic residues; sequence GDPKGRRRDPAGEAVDPRKKKGAAEAG. Low complexity predominate over residues 128 to 139; that stretch reads AAAAAMATPARP. Tyr201 is subject to Phosphotyrosine. CCHC-type zinc fingers lie at residues 335 to 350, 352 to 368, and 372 to 387; these read CFKC…SCTQ, RCFR…YCRK, and CNLC…QCPK.

As to quaternary structure, interacts with CGAS. Interacts with RIGI. Interacts with IFIH1/MDA5.

The protein localises to the cytoplasm. Functionally, nucleic acid-binding protein involved in innate immune response to DNA and RNA viruses. Binds DNA and RNA in the cytoplasm and acts by promoting recognition of viral nucleic acids by virus sensors, such as RIGI, IFIH1/MDA5 and CGAS. Acts as a co-sensor for recognition of double-stranded DNA (dsDNA) by cGAS in the cytoplasm, thereby playing a role in innate immune response to cytosolic dsDNA and DNA virus. Binds dsDNA and probably acts by promoting sensing of dsDNA by CGAS, leading to enhance CGAS oligomerization and activation. Promotes sensing of viral RNA by RIGI-like receptors proteins RIGI and IFIH1/MDA5 via two mechanisms: binds double-stranded RNA (dsRNA), enhancing the binding of RIGI and IFIH1/MDA5 to dsRNA and promotes 'Lys-63'-linked ubiquitination and subsequent activation of RIGI and IFIH1/MDA5. The sequence is that of Zinc finger CCHC domain-containing protein 3 from Homo sapiens (Human).